The primary structure comprises 418 residues: Light-independent protochlorophyllide reductase subunit N (418 aa).

Positions 17, 42, and 103 each coordinate [4Fe-4S] cluster.

Belongs to the BchN/ChlN family. In terms of assembly, protochlorophyllide reductase is composed of three subunits; ChlL, ChlN and ChlB. Forms a heterotetramer of two ChlB and two ChlN subunits. [4Fe-4S] cluster serves as cofactor.

It carries out the reaction chlorophyllide a + oxidized 2[4Fe-4S]-[ferredoxin] + 2 ADP + 2 phosphate = protochlorophyllide a + reduced 2[4Fe-4S]-[ferredoxin] + 2 ATP + 2 H2O. It participates in porphyrin-containing compound metabolism; chlorophyll biosynthesis (light-independent). Functionally, component of the dark-operative protochlorophyllide reductase (DPOR) that uses Mg-ATP and reduced ferredoxin to reduce ring D of protochlorophyllide (Pchlide) to form chlorophyllide a (Chlide). This reaction is light-independent. The NB-protein (ChlN-ChlB) is the catalytic component of the complex. The chain is Light-independent protochlorophyllide reductase subunit N from Prochlorococcus marinus (strain SARG / CCMP1375 / SS120).